The following is a 477-amino-acid chain: Glycogen synthase (477 aa).

Lys-15 contacts ADP-alpha-D-glucose.

The protein belongs to the glycosyltransferase 1 family. Bacterial/plant glycogen synthase subfamily.

It carries out the reaction [(1-&gt;4)-alpha-D-glucosyl](n) + ADP-alpha-D-glucose = [(1-&gt;4)-alpha-D-glucosyl](n+1) + ADP + H(+). It participates in glycan biosynthesis; glycogen biosynthesis. Its function is as follows. Synthesizes alpha-1,4-glucan chains using ADP-glucose. In Edwardsiella ictaluri (strain 93-146), this protein is Glycogen synthase.